Consider the following 362-residue polypeptide: Holliday junction branch migration complex subunit RuvB (362 aa).

A large ATPase domain (RuvB-L) region spans residues 4 to 186 (PDRPQRLVEQ…FGIPLRMQFY (183 aa)). Residues Ile25, Arg26, Gly67, Lys70, Thr71, Thr72, 133–135 (EDF), Arg176, Tyr186, and Arg223 contribute to the ATP site. Residue Thr71 participates in Mg(2+) binding. Residues 187 to 257 (EPEELQLIVA…AAGGALTRLE (71 aa)) are small ATPAse domain (RuvB-S). Residues 260 to 362 (RLGFDAMDRR…GTPEGEGEDV (103 aa)) form a head domain (RuvB-H) region. Residues Arg296, Arg315, and Arg320 each coordinate DNA.

This sequence belongs to the RuvB family. As to quaternary structure, homohexamer. Forms an RuvA(8)-RuvB(12)-Holliday junction (HJ) complex. HJ DNA is sandwiched between 2 RuvA tetramers; dsDNA enters through RuvA and exits via RuvB. An RuvB hexamer assembles on each DNA strand where it exits the tetramer. Each RuvB hexamer is contacted by two RuvA subunits (via domain III) on 2 adjacent RuvB subunits; this complex drives branch migration. In the full resolvosome a probable DNA-RuvA(4)-RuvB(12)-RuvC(2) complex forms which resolves the HJ.

Its subcellular location is the cytoplasm. It carries out the reaction ATP + H2O = ADP + phosphate + H(+). Its function is as follows. The RuvA-RuvB-RuvC complex processes Holliday junction (HJ) DNA during genetic recombination and DNA repair, while the RuvA-RuvB complex plays an important role in the rescue of blocked DNA replication forks via replication fork reversal (RFR). RuvA specifically binds to HJ cruciform DNA, conferring on it an open structure. The RuvB hexamer acts as an ATP-dependent pump, pulling dsDNA into and through the RuvAB complex. RuvB forms 2 homohexamers on either side of HJ DNA bound by 1 or 2 RuvA tetramers; 4 subunits per hexamer contact DNA at a time. Coordinated motions by a converter formed by DNA-disengaged RuvB subunits stimulates ATP hydrolysis and nucleotide exchange. Immobilization of the converter enables RuvB to convert the ATP-contained energy into a lever motion, pulling 2 nucleotides of DNA out of the RuvA tetramer per ATP hydrolyzed, thus driving DNA branch migration. The RuvB motors rotate together with the DNA substrate, which together with the progressing nucleotide cycle form the mechanistic basis for DNA recombination by continuous HJ branch migration. Branch migration allows RuvC to scan DNA until it finds its consensus sequence, where it cleaves and resolves cruciform DNA. The protein is Holliday junction branch migration complex subunit RuvB of Rhodospirillum centenum (strain ATCC 51521 / SW).